We begin with the raw amino-acid sequence, 284 residues long: Glutamate 5-kinase 2 (284 aa).

K26 serves as a coordination point for ATP. Substrate-binding residues include S67, D154, and N166. ATP is bound by residues 186–187 and 228–234; these read SD and SGGMVTK.

This sequence belongs to the glutamate 5-kinase family.

It is found in the cytoplasm. The enzyme catalyses L-glutamate + ATP = L-glutamyl 5-phosphate + ADP. It functions in the pathway amino-acid biosynthesis; L-proline biosynthesis; L-glutamate 5-semialdehyde from L-glutamate: step 1/2. Its function is as follows. Catalyzes the transfer of a phosphate group to glutamate to form L-glutamate 5-phosphate. The polypeptide is Glutamate 5-kinase 2 (Mesorhizobium japonicum (strain LMG 29417 / CECT 9101 / MAFF 303099) (Mesorhizobium loti (strain MAFF 303099))).